We begin with the raw amino-acid sequence, 294 residues long: MLMNIGKVDNIKIYTLAEDYAGYNSPFWSQHGLSFLIEVESNGIKKRILFDTATYAEPILFNMKLLNINPKSIDMIILSHNHFDHTGGLFGIMKEINKEIPIFAHPNIFKVSFATEPEFMLAGTLNKTLKEDIEKLGGRWVLSRDPIRLMPGIFTLGEIEDEEKINFEKKPTIGLYKLENGRVVLDNVEDEIGLAIVTEKGLIIVSGCSHPGIVSMVKKSIKISGINKVYAVIGGFHLIDADNERIVSTIKALKKLGVKKICTGHCTGFKAENMFMEEFKEDFERLHAGKIIKF.

Substrate-binding residues include glutamate 116, aspartate 186, lysine 228, and histidine 265.

The protein belongs to the metallo-beta-lactamase superfamily. It depends on Mg(2+) as a cofactor.

It catalyses the reaction 4-(beta-D-ribofuranosyl)aminobenzene 5'-phosphate + (7,8-dihydropterin-6-yl)methyl diphosphate = N-[(7,8-dihydropterin-6-yl)methyl]-4-(beta-D-ribofuranosyl)aniline 5'-phosphate + diphosphate. Its pathway is cofactor biosynthesis; 5,6,7,8-tetrahydromethanopterin biosynthesis. Its function is as follows. Catalyzes the condensation of 6-hydroxymethyl-7,8-dihydropterin pyrophosphate (DHPP) with 4-(beta-D-ribofuranosyl)-aminobenzene-5'-phosphate (beta-RFA-P) to form 7,8-dihydropterin-6-methyl-4-(beta-D-ribofuranosyl)-aminobenzene-5'-phosphate, a precursor in the biosynthesis of 5,6,7,8-tetrahydromethanopterin (H4MPT). To a lesser extent, is able to condense beta-RFA-P with another arylamine, 1-(4-aminophenyl)-1-deoxy-D-ribitol (APDR), to form 7,8-dihydropterin-6-methyl-1-(4-aminophenyl)-1-deoxy-D-ribitol. Dephosphorylated beta-RFA-P is not a substrate. In Methanocaldococcus jannaschii (strain ATCC 43067 / DSM 2661 / JAL-1 / JCM 10045 / NBRC 100440) (Methanococcus jannaschii), this protein is 7,8-dihydropterin-6-methyl-4-(beta-D-ribofuranosyl)-aminobenzene-5'-phosphate synthase.